The chain runs to 225 residues: MTRAIRIAPSLLSADFAISRPRCPSDGRTGADILHFDVMDNHYVPNLTVGPLVCAALRPHTSLPIDVHLMTRPVDPLIDSFAEAGADMITFHPEASDHVHRSVQMIRKRGLKAGVALNPASPLSLLDHILEDLDLVLIMSVNPGFGGQSFIPSALPKIAALANGRRRACRGDRVDGGVNPADARALARPGADILVRLAIFGASDRAKAIASIRGAAESGLGQEAA.

Ser10 is a binding site for substrate. A divalent metal cation is bound by residues His35, Asp37, and His68. Asp37 acts as the Proton acceptor in catalysis. Residues His68, 144–147 (GFGG), and 175–177 (DGG) contribute to the substrate site. Position 175 (Asp175) interacts with a divalent metal cation. Catalysis depends on Asp175, which acts as the Proton donor.

It belongs to the ribulose-phosphate 3-epimerase family. It depends on a divalent metal cation as a cofactor.

The enzyme catalyses D-ribulose 5-phosphate = D-xylulose 5-phosphate. Its pathway is carbohydrate degradation. Functionally, catalyzes the reversible epimerization of D-ribulose 5-phosphate to D-xylulose 5-phosphate. This is Ribulose-phosphate 3-epimerase from Rhodospirillum rubrum.